A 251-amino-acid polypeptide reads, in one-letter code: Derlin-1 (251 aa).

Residue serine 2 is modified to N-acetylserine. At 2 to 15 (SDIGDWFRSIPAIT) the chain is on the cytoplasmic side. A helical membrane pass occupies residues 16–31 (RYWFAATVAVPLIGKL). Topologically, residues 32–69 (GIISPAYFFLWPEAFLYRFQIWRPFTATFYFPVGPGTG) are lumenal. The chain crosses the membrane as a helical span at residues 70–89 (FLYLVNLYFLYQYSTRLEAG). The Cytoplasmic segment spans residues 90 to 94 (AFDGR). A helical transmembrane segment spans residues 95-115 (PADYLFMLLFNWICIVITGLA). At 116-122 (MDMQLLM) the chain is on the lumenal side. The chain crosses the membrane as a helical span at residues 123–137 (IPLIMSVLYVWAQLN). At 138-154 (RDLIVSFWFGTRFKACY) the chain is on the cytoplasmic side. The helical transmembrane segment at 155–166 (LPWVILGFNYII) threads the bilayer. Over 167–170 (GGSV) the chain is Lumenal. A helical transmembrane segment spans residues 171–189 (INELIGNLVGHLYFFLMFR). Topologically, residues 190–251 (YPMDLGGRNF…WGQGFRLGDQ (62 aa)) are cytoplasmic. At serine 201 the chain carries Phosphoserine. Residue threonine 202 is modified to Phosphothreonine. Serine 226 is modified (phosphoserine). The tract at residues 229-251 (RAADQNGGGGRHNWGQGFRLGDQ) is disordered. An SHP-box motif is present at residues 241-248 (NWGQGFRL).

This sequence belongs to the derlin family. As to quaternary structure, homotetramer. The four subunits of the tetramer are arranged in a twofold symmetry. Forms homo- and heterooligomers with DERL2 and DERL3; binding to DERL3 is poorer than that between DERL2 and DERL3. Interacts (via SHP-box motif) with VCP. Interacts with AMFR, SELENOS, SEL1L, SELENOK and SYVN1, as well as with SEL1L-SYVN1 and VCP-SELENOS protein complexes; this interaction is weaker than that observed between DERL2 and these complexes. Interacts with NGLY1 and YOD1. Does not bind to EDEM1. Interacts with DNAJB9. Interacts with RNF103. Interacts with HM13. Interacts with XBP1 isoform 1 (via luminal/ectodomain domain); the interaction obviates the need for ectodomain shedding prior HM13/SPP-mediated XBP1 isoform 1 cleavage. Interacts with the signal recognition particle/SRP and the SRP receptor; in the process of endoplasmic reticulum stress-induced pre-emptive quality control. May interact with UBXN6. Interacts with ZFAND2B; probably through VCP. Interacts with CCDC47. Interacts with C18orf32. May interact with TRAM1. Forms a complex with SVIP and VCP/p97. Widely expressed, with lowest levels in brain and heart.

The protein resides in the endoplasmic reticulum membrane. Functional component of endoplasmic reticulum-associated degradation (ERAD) for misfolded lumenal proteins. Forms homotetramers which encircle a large channel traversing the endoplasmic reticulum (ER) membrane. This allows the retrotranslocation of misfolded proteins from the ER into the cytosol where they are ubiquitinated and degraded by the proteasome. The channel has a lateral gate within the membrane which provides direct access to membrane proteins with no need to reenter the ER lumen first. May mediate the interaction between VCP and the misfolded protein. Also involved in endoplasmic reticulum stress-induced pre-emptive quality control, a mechanism that selectively attenuates the translocation of newly synthesized proteins into the endoplasmic reticulum and reroutes them to the cytosol for proteasomal degradation. By controlling the steady-state expression of the IGF1R receptor, indirectly regulates the insulin-like growth factor receptor signaling pathway. This Mus musculus (Mouse) protein is Derlin-1.